Here is a 177-residue protein sequence, read N- to C-terminus: ATP synthase subunit delta (177 aa).

This sequence belongs to the ATPase delta chain family. In terms of assembly, F-type ATPases have 2 components, F(1) - the catalytic core - and F(0) - the membrane proton channel. F(1) has five subunits: alpha(3), beta(3), gamma(1), delta(1), epsilon(1). F(0) has three main subunits: a(1), b(2) and c(10-14). The alpha and beta chains form an alternating ring which encloses part of the gamma chain. F(1) is attached to F(0) by a central stalk formed by the gamma and epsilon chains, while a peripheral stalk is formed by the delta and b chains.

The protein localises to the cell inner membrane. In terms of biological role, f(1)F(0) ATP synthase produces ATP from ADP in the presence of a proton or sodium gradient. F-type ATPases consist of two structural domains, F(1) containing the extramembraneous catalytic core and F(0) containing the membrane proton channel, linked together by a central stalk and a peripheral stalk. During catalysis, ATP synthesis in the catalytic domain of F(1) is coupled via a rotary mechanism of the central stalk subunits to proton translocation. This protein is part of the stalk that links CF(0) to CF(1). It either transmits conformational changes from CF(0) to CF(1) or is implicated in proton conduction. The chain is ATP synthase subunit delta from Shewanella pealeana (strain ATCC 700345 / ANG-SQ1).